The sequence spans 227 residues: Thymidine kinase 1 (227 aa).

Residues 15-22 (GPMFSGKT), 47-49 (DTR), and 91-94 (DEGQ) each bind ATP. The active-site Proton acceptor is the glutamate 92. Substrate is bound at residue phenylalanine 122. Residues cysteine 147 and cysteine 150 each coordinate Zn(2+). Residues 166-170 (IELIG) and tyrosine 175 contribute to the substrate site. Cysteine 179 and cysteine 182 together coordinate Zn(2+). The segment covering 187 to 196 (QNEGNSTKPS) has biased composition (polar residues). Residues 187-227 (QNEGNSTKPSKTARHSHSQSAPSVAPLAVNINPDDHLNNDY) form a disordered region.

It belongs to the thymidine kinase family. Interacts with calmodulin in the presence of Ca(2+).

The catalysed reaction is thymidine + ATP = dTMP + ADP + H(+). This Dictyostelium discoideum (Social amoeba) protein is Thymidine kinase 1.